The sequence spans 388 residues: Chorismate synthase (388 aa).

NADP(+)-binding residues include Arg39 and Arg45. Residues 130–132, 251–252, Gly296, 311–315, and Arg337 contribute to the FMN site; these read RSS, NA, and KPIPT.

It belongs to the chorismate synthase family. As to quaternary structure, homotetramer. The cofactor is FMNH2.

It catalyses the reaction 5-O-(1-carboxyvinyl)-3-phosphoshikimate = chorismate + phosphate. The protein operates within metabolic intermediate biosynthesis; chorismate biosynthesis; chorismate from D-erythrose 4-phosphate and phosphoenolpyruvate: step 7/7. Catalyzes the anti-1,4-elimination of the C-3 phosphate and the C-6 proR hydrogen from 5-enolpyruvylshikimate-3-phosphate (EPSP) to yield chorismate, which is the branch point compound that serves as the starting substrate for the three terminal pathways of aromatic amino acid biosynthesis. This reaction introduces a second double bond into the aromatic ring system. The protein is Chorismate synthase of Streptococcus pyogenes serotype M2 (strain MGAS10270).